Reading from the N-terminus, the 102-residue chain is Large ribosomal subunit protein bL21 (102 aa).

The protein belongs to the bacterial ribosomal protein bL21 family. In terms of assembly, part of the 50S ribosomal subunit. Contacts protein L20.

Functionally, this protein binds to 23S rRNA in the presence of protein L20. The protein is Large ribosomal subunit protein bL21 of Azorhizobium caulinodans (strain ATCC 43989 / DSM 5975 / JCM 20966 / LMG 6465 / NBRC 14845 / NCIMB 13405 / ORS 571).